We begin with the raw amino-acid sequence, 111 residues long: Pyrimidine/purine nucleoside phosphorylase 1 (111 aa).

This sequence belongs to the nucleoside phosphorylase PpnP family.

The enzyme catalyses a purine D-ribonucleoside + phosphate = a purine nucleobase + alpha-D-ribose 1-phosphate. It carries out the reaction adenosine + phosphate = alpha-D-ribose 1-phosphate + adenine. The catalysed reaction is cytidine + phosphate = cytosine + alpha-D-ribose 1-phosphate. It catalyses the reaction guanosine + phosphate = alpha-D-ribose 1-phosphate + guanine. The enzyme catalyses inosine + phosphate = alpha-D-ribose 1-phosphate + hypoxanthine. It carries out the reaction thymidine + phosphate = 2-deoxy-alpha-D-ribose 1-phosphate + thymine. The catalysed reaction is uridine + phosphate = alpha-D-ribose 1-phosphate + uracil. It catalyses the reaction xanthosine + phosphate = alpha-D-ribose 1-phosphate + xanthine. Functionally, catalyzes the phosphorolysis of diverse nucleosides, yielding D-ribose 1-phosphate and the respective free bases. Can use uridine, adenosine, guanosine, cytidine, thymidine, inosine and xanthosine as substrates. Also catalyzes the reverse reactions. This chain is Pyrimidine/purine nucleoside phosphorylase 1, found in Psychrobacter arcticus (strain DSM 17307 / VKM B-2377 / 273-4).